The primary structure comprises 485 residues: Cys-Gly metallodipeptidase DUG1 (485 aa).

His-109 lines the Zn(2+) pocket. Residue Asp-111 is part of the active site. Asp-144 contacts Zn(2+). Glu-178 functions as the Proton acceptor in the catalytic mechanism. 3 residues coordinate Zn(2+): Glu-179, Asp-207, and His-457.

This sequence belongs to the peptidase M20A family. In terms of assembly, homodimer. Component of the GSH degradosomal complex. The cofactor is Zn(2+). Mn(2+) is required as a cofactor.

The protein resides in the cytoplasm. Its function is as follows. Catalytic component of the GSH degradosomal complex involved in the degradation of glutathione (GSH) and other peptides containing a gamma-glu-X bond. Also functions as a dipeptidase with high specificity for Cys-Gly and no activity toward tri- or tetrapeptides. This chain is Cys-Gly metallodipeptidase DUG1 (DUG1), found in Candida albicans (strain SC5314 / ATCC MYA-2876) (Yeast).